Reading from the N-terminus, the 440-residue chain is T-box transcription factor T homolog 2 (440 aa).

A DNA-binding region (T-box) is located at residues 44 to 215 (LWEKFKSLTN…HNPFAKAFLD (172 aa)). Disordered stretches follow at residues 282 to 303 (APYPHPYQRSSPPTNYGHDTAA) and 393 to 440 (TTAS…MPSM). Polar residues predominate over residues 409–440 (STDSGYGHSTTPPAPQTRITSNNWSPMTMPSM).

Mesoderm and notochord.

It localises to the nucleus. Involved in the transcriptional regulation of genes required for mesoderm formation and differentiation. The chain is T-box transcription factor T homolog 2 from Branchiostoma floridae (Florida lancelet).